The chain runs to 439 residues: Na(+)/H(+) antiporter NhaA (439 aa).

11 consecutive transmembrane segments (helical) span residues 12–32 (SMNIAASILLFVAAIAAAIIA), 67–87 (MIEFINDGLMTIFFLLVGLEI), 103–123 (ALPFIAACGGMLFPVIVYMSI), 133–153 (GLAIPMATDIAFSLGVLSLLG), 162–182 (IFLTAFAVVDDIGGILVIALF), 186–206 (HVSYGYILIAALLYVLLYFIG), 214–234 (IFFLVIGVVIWYLFLQSGIHS), 314–334 (ILPLFAFVNAGVVFSGGGELV), 341–361 (VAAGLLFGKFAGIYFFTWLAI), 379–399 (GIALLGGIGFTVSLFIANLSF), and 412–432 (FGVLSGTILSGLLGYIVLRIV).

Belongs to the NhaA Na(+)/H(+) (TC 2.A.33) antiporter family.

Its subcellular location is the cell inner membrane. It carries out the reaction Na(+)(in) + 2 H(+)(out) = Na(+)(out) + 2 H(+)(in). Na(+)/H(+) antiporter that extrudes sodium in exchange for external protons. The chain is Na(+)/H(+) antiporter NhaA from Bacteroides thetaiotaomicron (strain ATCC 29148 / DSM 2079 / JCM 5827 / CCUG 10774 / NCTC 10582 / VPI-5482 / E50).